Reading from the N-terminus, the 794-residue chain is Phenylalanine--tRNA ligase beta subunit (794 aa).

Residues 39 to 154 (SSSFSSIITA…ANTPLGESAC (116 aa)) form the tRNA-binding domain. Residues 403–481 (PPSPTLTLRT…QPWKIEKKKA (79 aa)) form the B5 domain. The Mg(2+) site is built by Asp457, Asp463, Glu466, and Glu467. Positions 697-793 (PIYPSSFRDI…QLDDTKGTID (97 aa)) constitute an FDX-ACB domain.

This sequence belongs to the phenylalanyl-tRNA synthetase beta subunit family. Type 1 subfamily. In terms of assembly, tetramer of two alpha and two beta subunits. Mg(2+) serves as cofactor.

Its subcellular location is the cytoplasm. The enzyme catalyses tRNA(Phe) + L-phenylalanine + ATP = L-phenylalanyl-tRNA(Phe) + AMP + diphosphate + H(+). The chain is Phenylalanine--tRNA ligase beta subunit from Chlamydia abortus (strain DSM 27085 / S26/3) (Chlamydophila abortus).